Reading from the N-terminus, the 424-residue chain is UPF0229 protein PputGB1_0427 (424 aa).

Residues Glu81–Ser107 form a disordered region. Over residues Gln92 to Ser107 the composition is skewed to gly residues.

Belongs to the UPF0229 family.

This is UPF0229 protein PputGB1_0427 from Pseudomonas putida (strain GB-1).